The chain runs to 295 residues: Vesicle-associated protein 4-2 (295 aa).

Positions 1–10 are enriched in basic and acidic residues; the sequence is MTMTEEKPTS. Positions 1–99 are disordered; the sequence is MTMTEEKPTS…PSPSVSSVAK (99 aa). Residues 31–53 are compositionally biased toward low complexity; sequence NAASSAATSPFPSGASSSSTSSH. The span at 54 to 71 shows a compositional bias: basic residues; the sequence is LHNHHQHHHQHHHQHHHQ. Polar residues predominate over residues 83–98; that stretch reads GQNQHPTPSPSVSSVA. The region spanning 107-229 is the MSP domain; that stretch reads RLKLDPSEKL…KEQILRVIFL (123 aa). The segment covering 249–263 has biased composition (basic and acidic residues); it reads DAAVEARKKPPEETG. The interval 249 to 270 is disordered; that stretch reads DAAVEARKKPPEETGPKMIGEG. Serine 294 is subject to Phosphoserine.

It belongs to the VAMP-associated protein (VAP) (TC 9.B.17) family.

Functionally, may play a role in vesicle trafficking. The sequence is that of Vesicle-associated protein 4-2 (PVA42) from Arabidopsis thaliana (Mouse-ear cress).